The sequence spans 878 residues: Coatomer subunit gamma (878 aa).

HEAT repeat units follow at residues 64–101, 287–324, 326–359, 360–396, 399–434, and 471–508; these read REAT…VAED, RMLS…THPA, VTTC…GAES, SVER…KYPR, TVLM…ENAD, and ATPS…SCPA.

Belongs to the COPG family. In terms of assembly, oligomeric complex that consists of at least the alpha, beta, beta', gamma, delta, epsilon and zeta subunits.

The protein localises to the cytoplasm. It is found in the golgi apparatus membrane. Its subcellular location is the cytoplasmic vesicle. The protein resides in the COPI-coated vesicle membrane. It localises to the endoplasmic reticulum. The coatomer is a cytosolic protein complex that binds to dilysine motifs and reversibly associates with Golgi non-clathrin-coated vesicles, which further mediate biosynthetic protein transport from the ER, via the Golgi up to the trans Golgi network. Coatomer complex is required for budding from Golgi membranes, and is essential for the retrograde Golgi-to-ER transport of dilysine-tagged proteins. Required for limiting lipid storage in lipid droplets. Involved in the expansion of luminal extracellular matrices and apical membrane during tubulogenesis. Required in the tracheal epithelium for luminal protein secretion and diametric tube growth. In salivary glands, required for deposition of O-glycans and luminal extracellular matrix assembly. Required for epidermal morphogenesis and cuticle development. In Drosophila pseudoobscura pseudoobscura (Fruit fly), this protein is Coatomer subunit gamma.